We begin with the raw amino-acid sequence, 367 residues long: Flagellar P-ring protein (367 aa).

The signal sequence occupies residues Met1–Ala21.

It belongs to the FlgI family. As to quaternary structure, the basal body constitutes a major portion of the flagellar organelle and consists of four rings (L,P,S, and M) mounted on a central rod.

The protein resides in the periplasm. It localises to the bacterial flagellum basal body. In terms of biological role, assembles around the rod to form the L-ring and probably protects the motor/basal body from shearing forces during rotation. This Salmonella choleraesuis (strain SC-B67) protein is Flagellar P-ring protein.